We begin with the raw amino-acid sequence, 419 residues long: Tyrosine--tRNA ligase (419 aa).

Y42 contacts L-tyrosine. The 'HIGH' region signature appears at 47 to 56; it reads CTAPSLHVGS. L-tyrosine contacts are provided by Y179 and Q183. The short motif at 239-243 is the 'KMSKS' region element; that stretch reads KMGKT. K242 contacts ATP. Residues 353 to 419 enclose the S4 RNA-binding domain; it reads LGVLAAFVKA…RKRHVLLKLV (67 aa).

It belongs to the class-I aminoacyl-tRNA synthetase family. TyrS type 1 subfamily. In terms of assembly, homodimer.

The protein localises to the cytoplasm. The catalysed reaction is tRNA(Tyr) + L-tyrosine + ATP = L-tyrosyl-tRNA(Tyr) + AMP + diphosphate + H(+). Its function is as follows. Catalyzes the attachment of tyrosine to tRNA(Tyr) in a two-step reaction: tyrosine is first activated by ATP to form Tyr-AMP and then transferred to the acceptor end of tRNA(Tyr). The protein is Tyrosine--tRNA ligase of Methylocella silvestris (strain DSM 15510 / CIP 108128 / LMG 27833 / NCIMB 13906 / BL2).